The primary structure comprises 244 residues: MSSGLYLYGIFPDPIPETVTLQGLDSQLVYSQIIDGFTFLYSEAKQEKYLASRRNLISHEKVLEQAMHAGFRTLLPLRFGLVVKNWETVVTQLLQPYKAQLRELFQKLAGRREVSVKIFWDSKAELQAMMDSHQDLKQKRDQMEGKALSMEEVIHIGQLIESNLLSRKESIIQVFFDELKPLADEVIESDPMTEDMIYNAAFLIPWENESIFSQQVESIDHKFDERLRIRYNNFTAPYTFAQIS.

The protein belongs to the gas vesicle GvpF/GvpL family. In terms of assembly, binds GvpA.

It localises to the gas vesicle. A minor component of the gas vesicle, may be involved in preventing GvpA aggregation during gas vesicle nucleation. Gas vesicles (GV) are hollow, gas filled proteinaceous nanostructures. During planktonic growth they allow positioning of the organism at a favorable depth for light or nutrient acquisition. Its function is as follows. Cluster expression in E.coli (gvpA1-gvpA2-gvpC-gvpN-gvpJ-gvpK-gvpF-gvpG-gvpV-gvpW) allows cells to float and produces irregularly shaped gas vesicles. The sequence is that of Gas vesicle protein F from Nostoc sp. (strain PCC 7120 / SAG 25.82 / UTEX 2576).